Here is a 150-residue protein sequence, read N- to C-terminus: Ribonuclease K6 (150 aa).

The first 23 residues, 1–23 (MVLCFPLLLLLLVLWGPVCLLHA), serve as a signal peptide directing secretion. Residue His38 is the Proton acceptor of the active site. Intrachain disulfides connect Cys46/Cys104, Cys60/Cys114, Cys78/Cys129, and Cys85/Cys92. N-linked (GlcNAc...) asparagine glycosylation is present at Asn55. Substrate is bound by residues 61–65 (KHQNT) and Lys86. Residue Asn100 is glycosylated (N-linked (GlcNAc...) asparagine). Substrate is bound at residue Arg105. Catalysis depends on His145, which acts as the Proton donor.

The protein belongs to the pancreatic ribonuclease family. Interacts (via N-terminus) with bacterial lipopolysaccharide (LPS).

Its subcellular location is the secreted. It localises to the lysosome. The protein resides in the cytoplasmic granule. In terms of biological role, ribonuclease which shows a preference for the pyrimidines uridine and cytosine. Has potent antibacterial activity against a range of Gram-positive and Gram-negative bacteria, including P.aeruginosa, A.baumanii, M.luteus, S.aureus, E.faecalis, E.faecium, S.saprophyticus and E.coli. Causes loss of bacterial membrane integrity, and also promotes agglutination of Gram-negative bacteria. Probably contributes to urinary tract sterility. Bactericidal activity is independent of RNase activity. In Macaca mulatta (Rhesus macaque), this protein is Ribonuclease K6 (RNASE6).